The sequence spans 70 residues: DNA-directed RNA polymerase subunit omega (70 aa).

This sequence belongs to the RNA polymerase subunit omega family. As to quaternary structure, in cyanobacteria the RNAP catalytic core is composed of 2 alpha, 1 beta, 1 beta', 1 gamma and 1 omega subunit. When a sigma factor is associated with the core the holoenzyme is formed, which can initiate transcription.

It catalyses the reaction RNA(n) + a ribonucleoside 5'-triphosphate = RNA(n+1) + diphosphate. Promotes RNA polymerase assembly. Latches the N- and C-terminal regions of the beta' subunit thereby facilitating its interaction with the beta and alpha subunits. The sequence is that of DNA-directed RNA polymerase subunit omega from Prochlorococcus marinus (strain NATL1A).